The chain runs to 122 residues: Biogenesis of lysosome-related organelles complex 1 subunit CNL1 (122 aa).

Positions 1–10 (MQDNSSHSRE) are enriched in basic and acidic residues. Residues 1-21 (MQDNSSHSRESASAGDDPLGI) are disordered. Positions 63–95 (ENTIDKNIAKFKELLEKCDTLENHYEMLNQLAI) form a coiled coil.

The protein belongs to the BLOC1S4 family. In terms of assembly, component of the biogenesis of lysosome-related organelles complex-1 (BLOC-1) composed of at least BLI1, BLS1, CNL1, KXD1, SNN1 and VAB2.

It localises to the cytoplasm. Functionally, component of the biogenesis of lysosome-related organelles complex-1 (BLOC-1), a complex that is involved in endosomal cargo sorting. This Saccharomyces cerevisiae (strain RM11-1a) (Baker's yeast) protein is Biogenesis of lysosome-related organelles complex 1 subunit CNL1 (CLN1).